Reading from the N-terminus, the 409-residue chain is Pleckstrin homology domain-containing family O member 1 (409 aa).

Residues 1-20 form a disordered region; that stretch reads MMKKNNSTKRGPQDGNHQCA. The region spanning 21–132 is the PH domain; the sequence is PPEKVGWVRK…WINALNSAIT (112 aa). An interaction with capping proteins (CPs) region spans residues 133–193; the sequence is RAKNRVLDEV…MLTLDLIQEE (61 aa). Positions 136–308 are interaction with ATM, CKIP, IFP35 and NMI; sequence NRVLDEVTVE…PHAPGQLSRI (173 aa). 3 disordered regions span residues 218–304, 325–350, and 390–409; these read LAGS…APGQ, EVQG…ESEQ, and TPDS…KSLM. S227 and S271 each carry phosphoserine. The segment at 308-409 is negative regulator of AP-1 activity; it reads IQDLVARKLE…QHSQYRKSLM (102 aa). A compositionally biased stretch (basic and acidic residues) spans 331–340; that stretch reads DGKRKAKEPP. S342 is subject to Phosphoserine. Residues 390-402 are compositionally biased toward polar residues; that stretch reads TPDSHLRQTTQHS.

As to quaternary structure, heterodimer or homodimer. Interacts with CK2 and actin capping subunits (capping protein CP-alpha and CP-beta). CKIP1 and CK2 together inhibit the activity of actin capping protein at the barbed ends of actin filaments. Interacts with ATM, IFP35, JUN, JUND, NMI and PI3K. Interacts with AKT1, AKT2 and AKT3 (each isozyme of PKB), PtdIns(3,5)P2, PtdIns(4,5)P2 and PtdIns(3,4,5)P2. Post-translationally, C-terminal fragments could be released during apoptosis via caspase-3-dependent cleavage.

It is found in the membrane. Its subcellular location is the nucleus. The protein localises to the cytoplasm. Plays a role in the regulation of the actin cytoskeleton through its interactions with actin capping protein (CP). May function to target CK2 to the plasma membrane thereby serving as an adapter to facilitate the phosphorylation of CP by protein kinase 2 (CK2). Appears to target ATM to the plasma membrane. Also implicated in PI3K-regulated muscle differentiation, the regulation of AP-1 activity (plasma membrane bound AP-1 regulator that translocates to the nucleus) and the promotion of apoptosis induced by tumor necrosis factor TNF. When bound to PKB, it inhibits it probably by decreasing PKB level of phosphorylation. The polypeptide is Pleckstrin homology domain-containing family O member 1 (PLEKHO1) (Bos taurus (Bovine)).